The primary structure comprises 139 residues: Hydrogenase maturation factor HypA (139 aa).

Residue H2 coordinates Ni(2+). Residues C73, C76, C110, and C113 each coordinate Zn(2+).

The protein belongs to the HypA/HybF family.

In terms of biological role, involved in the maturation of [NiFe] hydrogenases. Required for nickel insertion into the metal center of the hydrogenase. This is Hydrogenase maturation factor HypA from Pyrococcus abyssi (strain GE5 / Orsay).